The sequence spans 430 residues: Glutamate-1-semialdehyde 2,1-aminomutase (430 aa).

K267 carries the post-translational modification N6-(pyridoxal phosphate)lysine.

Belongs to the class-III pyridoxal-phosphate-dependent aminotransferase family. HemL subfamily. Homodimer. The cofactor is pyridoxal 5'-phosphate.

Its subcellular location is the cytoplasm. The enzyme catalyses (S)-4-amino-5-oxopentanoate = 5-aminolevulinate. The protein operates within porphyrin-containing compound metabolism; protoporphyrin-IX biosynthesis; 5-aminolevulinate from L-glutamyl-tRNA(Glu): step 2/2. The sequence is that of Glutamate-1-semialdehyde 2,1-aminomutase from Anaeromyxobacter dehalogenans (strain 2CP-1 / ATCC BAA-258).